The primary structure comprises 540 residues: Chaperonin GroEL (540 aa).

ATP-binding positions include 29-32 (TLGP), 86-90 (DGTTT), Gly-413, 476-478 (NAA), and Asp-492.

The protein belongs to the chaperonin (HSP60) family. As to quaternary structure, forms a cylinder of 14 subunits composed of two heptameric rings stacked back-to-back. Interacts with the co-chaperonin GroES.

It is found in the cytoplasm. It carries out the reaction ATP + H2O + a folded polypeptide = ADP + phosphate + an unfolded polypeptide.. Together with its co-chaperonin GroES, plays an essential role in assisting protein folding. The GroEL-GroES system forms a nano-cage that allows encapsulation of the non-native substrate proteins and provides a physical environment optimized to promote and accelerate protein folding. This Streptococcus anginosus protein is Chaperonin GroEL.